We begin with the raw amino-acid sequence, 158 residues long: NAD(P)H-quinone oxidoreductase subunit J, chloroplastic (158 aa).

It belongs to the complex I 30 kDa subunit family. In terms of assembly, NDH is composed of at least 16 different subunits, 5 of which are encoded in the nucleus.

The protein resides in the plastid. Its subcellular location is the chloroplast thylakoid membrane. The catalysed reaction is a plastoquinone + NADH + (n+1) H(+)(in) = a plastoquinol + NAD(+) + n H(+)(out). It carries out the reaction a plastoquinone + NADPH + (n+1) H(+)(in) = a plastoquinol + NADP(+) + n H(+)(out). Functionally, NDH shuttles electrons from NAD(P)H:plastoquinone, via FMN and iron-sulfur (Fe-S) centers, to quinones in the photosynthetic chain and possibly in a chloroplast respiratory chain. The immediate electron acceptor for the enzyme in this species is believed to be plastoquinone. Couples the redox reaction to proton translocation, and thus conserves the redox energy in a proton gradient. The sequence is that of NAD(P)H-quinone oxidoreductase subunit J, chloroplastic from Nuphar advena (Common spatterdock).